The primary structure comprises 431 residues: Serine hydroxymethyltransferase (431 aa).

A (6S)-5,6,7,8-tetrahydrofolate-binding site is contributed by 121-123 (AHV). N6-(pyridoxal phosphate)lysine is present on lysine 227.

The protein belongs to the SHMT family. As to quaternary structure, homodimer. Requires pyridoxal 5'-phosphate as cofactor.

Its subcellular location is the cytoplasm. It participates in amino-acid biosynthesis; glycine biosynthesis; glycine from L-serine: step 1/1. Its function is as follows. Catalyzes the reversible interconversion of serine and glycine with a modified folate serving as the one-carbon carrier. Also exhibits a pteridine-independent aldolase activity toward beta-hydroxyamino acids, producing glycine and aldehydes, via a retro-aldol mechanism. The protein is Serine hydroxymethyltransferase of Metallosphaera sedula (strain ATCC 51363 / DSM 5348 / JCM 9185 / NBRC 15509 / TH2).